Here is a 151-residue protein sequence, read N- to C-terminus: Phospholipase A2 inhibitor BjussuMIP (151 aa).

The N-terminal stretch at 1-4 (LANG) is a signal peptide. Positions 31-146 (LKYAFLTVHK…CDENLLVVCE (116 aa)) constitute a C-type lectin domain. Disulfide bonds link cysteine 68/cysteine 145 and cysteine 123/cysteine 137. Asparagine 107 carries N-linked (GlcNAc...) asparagine glycosylation.

It belongs to the alpha-type phospholipase A2 inhibitor family. Oligomer. In terms of tissue distribution, expressed by the liver.

The protein localises to the secreted. Functionally, inhibits enzymatic, anticoagulant, edema formation, myotoxicity activities induced by snakes phospholipase A2. Is oligomeric, but it is probable that each of its subunits can bind and inactive a PLA2 molecule. This chain is Phospholipase A2 inhibitor BjussuMIP, found in Bothrops jararacussu (Jararacussu).